We begin with the raw amino-acid sequence, 294 residues long: NADH-cytochrome b5 reductase 1 (294 aa).

The chain crosses the membrane as a helical span at residues 18-38 (PFIVFATVATIISAFIGYYFL). Residues 51–154 (DEFQKFPLIE…RGPKGFFTYT (104 aa)) form the FAD-binding FR-type domain. FAD contacts are provided by residues 134–149 (AGKN…GPKG) and 160–192 (SFGM…KIHL).

Belongs to the flavoprotein pyridine nucleotide cytochrome reductase family. In terms of assembly, monomer. Component of the 2-(3-amino-3-carboxypropyl)histidine synthase complex composed of DPH1, DPH2, DPH3 and a NADH-dependent reductase, predominantly CBR1. FAD is required as a cofactor.

The protein localises to the mitochondrion outer membrane. It carries out the reaction 2 Fe(III)-[cytochrome b5] + NADH = 2 Fe(II)-[cytochrome b5] + NAD(+) + H(+). It catalyses the reaction 2 Fe(3+)-[Dph3] + NADH = 2 Fe(2+)-[Dph3] + NAD(+) + H(+). It functions in the pathway protein modification; peptidyl-diphthamide biosynthesis. In terms of biological role, NADH-dependent reductase for DPH3 and cytochrome b5. Required for the first step of diphthamide biosynthesis, a post-translational modification of histidine which occurs in elongation factor 2. DPH1 and DPH2 transfer a 3-amino-3-carboxypropyl (ACP) group from S-adenosyl-L-methionine (SAM) to a histidine residue, the reaction is assisted by a reduction system comprising DPH3 and a NADH-dependent reductase, predominantly CBR1. By reducing DPH3, also involved in the formation of the tRNA wobble base modification mcm5s 2U (5-methoxycarbonylmethyl-2-thiouridine), mediated by the elongator complex. The cytochrome b5/NADH cytochrome b5 reductase electron transfer system supports the catalytic activity of several sterol biosynthetic enzymes. The sequence is that of NADH-cytochrome b5 reductase 1 (CBR1) from Candida albicans (strain SC5314 / ATCC MYA-2876) (Yeast).